An 83-amino-acid polypeptide reads, in one-letter code: Putative beta-neurotoxin RjAa15f (83 aa).

A signal peptide spans 1–18 (MKILIFIIASFMLIGVEC). The region spanning 19 to 82 (KEGYPMGRNG…VWDSSNNKCV (64 aa)) is the LCN-type CS-alpha/beta domain. 4 disulfide bridges follow: C29-C81, C33-C55, C40-C62, and C44-C64.

This sequence belongs to the long (4 C-C) scorpion toxin superfamily. Sodium channel inhibitor family. Beta subfamily. As to expression, expressed by the venom gland.

It is found in the secreted. Functionally, beta toxins bind voltage-independently at site-4 of sodium channels (Nav) and shift the voltage of activation toward more negative potentials thereby affecting sodium channel activation and promoting spontaneous and repetitive firing. The chain is Putative beta-neurotoxin RjAa15f from Rhopalurus junceus (Caribbean blue scorpion).